Here is a 76-residue protein sequence, read N- to C-terminus: Large ribosomal subunit protein bL28 (76 aa).

Positions 21 to 42 are disordered; that stretch reads RGKAKKEGGVGKHITKTSRRRQ. The span at 33 to 42 shows a compositional bias: basic residues; the sequence is HITKTSRRRQ.

This sequence belongs to the bacterial ribosomal protein bL28 family.

This is Large ribosomal subunit protein bL28 from Halothermothrix orenii (strain H 168 / OCM 544 / DSM 9562).